Reading from the N-terminus, the 306-residue chain is Natural cytotoxicity triggering receptor 1 (306 aa).

The first 21 residues, 1-21, serve as a signal peptide directing secretion; sequence MSSTLRALLCLGLCLSQRISA. Over 22 to 257 the chain is Extracellular; that stretch reads PKQTLPKPII…WDHTAQNLLR (236 aa). Ig-like domains follow at residues 42–100 and 137–192; these read EKQA…SCIY and GEKV…RCFG. Disulfide bonds link Cys-49–Cys-98 and Cys-144–Cys-190. An N-linked (GlcNAc...) asparagine glycan is attached at Asn-216. Residues 258–278 form a helical membrane-spanning segment; sequence MGLAFLVLVALVCLLVEDWLS. Residues 279–306 lie on the Cytoplasmic side of the membrane; sequence RKRTREQASRASTWEGRRRLNKHKDSEE.

It belongs to the natural cytotoxicity receptor (NCR) family. In terms of assembly, interacts with CD3Z and FCER1G. As to expression, expressed in NK cells.

It is found in the cell membrane. Its function is as follows. Cytotoxicity-activating receptor that may contribute to the increased efficiency of activated natural killer (NK) cells to mediate tumor cell lysis. The protein is Natural cytotoxicity triggering receptor 1 (NCR1) of Macaca fascicularis (Crab-eating macaque).